Here is a 1715-residue protein sequence, read N- to C-terminus: Protein PHYLLO, chloroplastic (1715 aa).

The N-terminal 19 residues, 1 to 19 (MRSSFLVSNPPFLPSLIPR), are a transit peptide targeting the chloroplast. Positions 20–273 (YSSRKSIRRS…EKSIFQVSSH (254 aa)) are inactive isochorismate synthase. The segment at 363-933 (NAVWASAIIE…GTKSELEDAL (571 aa)) is 2-succinyl-5-enolpyruvyl-6-hydroxy-3-cyclohexene-1-carboxylate synthase. A helical membrane pass occupies residues 429-449 (AVIITSSGTAVSNLLPAVVEA). The segment at 981–1364 (FLHPMIKNVL…SEDVMMNTLG (384 aa)) is O-succinylbenzoate synthase. K1170 acts as the Proton donor; for the o-succinylbenzoate synthase activity in catalysis. Positions 1202, 1228, and 1251 each coordinate Mg(2+). The active-site Proton acceptor; for the o-succinylbenzoate synthase activity is the K1279. The interval 1418–1715 (HFIRVHDVGE…QKLLLALKEM (298 aa)) is 2-succinyl-6-hydroxy-2,4-cyclohexadiene-1-carboxylate synthase. Positions 1435-1540 (LFLHGFLGTG…EGAVVVSGSP (106 aa)) constitute an AB hydrolase-1 domain.

The protein in the N-terminal section; belongs to the isochorismate synthase family. This sequence in the 2nd section; belongs to the TPP enzyme family. MenD subfamily. In the 3rd section; belongs to the mandelate racemase/muconate lactonizing enzyme family. MenC type 1 subfamily. It in the C-terminal section; belongs to the AB hydrolase superfamily. MenH family. Requires Mg(2+) as cofactor. It depends on Mn(2+) as a cofactor. Thiamine diphosphate is required as a cofactor.

Its subcellular location is the plastid. The protein localises to the chloroplast membrane. It carries out the reaction isochorismate + 2-oxoglutarate + H(+) = 5-enolpyruvoyl-6-hydroxy-2-succinyl-cyclohex-3-ene-1-carboxylate + CO2. The catalysed reaction is (1R,6R)-6-hydroxy-2-succinyl-cyclohexa-2,4-diene-1-carboxylate = 2-succinylbenzoate + H2O. It catalyses the reaction 5-enolpyruvoyl-6-hydroxy-2-succinyl-cyclohex-3-ene-1-carboxylate = (1R,6R)-6-hydroxy-2-succinyl-cyclohexa-2,4-diene-1-carboxylate + pyruvate. Its function is as follows. Multifunctional enzyme required for phylloquinone (vitamin K1) biosynthesis. This Arabidopsis thaliana (Mouse-ear cress) protein is Protein PHYLLO, chloroplastic (PHYLLO).